We begin with the raw amino-acid sequence, 237 residues long: Uridylate kinase (237 aa).

11–14 (KLSG) serves as a coordination point for ATP. Gly53 lines the UMP pocket. ATP-binding residues include Gly54 and Arg58. Residues Asp73 and 134 to 141 (TGNPFFTT) contribute to the UMP site. Positions 161, 167, and 170 each coordinate ATP.

Belongs to the UMP kinase family. In terms of assembly, homohexamer.

The protein resides in the cytoplasm. The catalysed reaction is UMP + ATP = UDP + ADP. The protein operates within pyrimidine metabolism; CTP biosynthesis via de novo pathway; UDP from UMP (UMPK route): step 1/1. Its activity is regulated as follows. Inhibited by UTP. Catalyzes the reversible phosphorylation of UMP to UDP. The sequence is that of Uridylate kinase from Burkholderia ambifaria (strain ATCC BAA-244 / DSM 16087 / CCUG 44356 / LMG 19182 / AMMD) (Burkholderia cepacia (strain AMMD)).